The sequence spans 681 residues: PAB-dependent poly(A)-specific ribonuclease subunit pan3-like (681 aa).

The segment at 9–38 adopts a C3H1-type zinc-finger fold; it reads FSTNIPCRNEQLYGRCPYIDKGCFFQHKNQ. Disordered stretches follow at residues 38-58 and 82-123; these read QDNAPASSKPPSATAIDPQNS and SSAS…TVSL. Low complexity predominate over residues 41–50; the sequence is APASSKPPSA. Over residues 96–106 the composition is skewed to polar residues; sequence KSYSSALSSGK. Position 165 is a phosphoserine (serine 165).

This sequence belongs to the protein kinase superfamily. PAN3 family.

The protein localises to the cytoplasm. Its function is as follows. Regulatory subunit of the poly(A)-nuclease (PAN) deadenylation complex. The polypeptide is PAB-dependent poly(A)-specific ribonuclease subunit pan3-like (Schizosaccharomyces pombe (strain 972 / ATCC 24843) (Fission yeast)).